The chain runs to 425 residues: Enolase (425 aa).

Gln-163 serves as a coordination point for (2R)-2-phosphoglycerate. Residue Glu-205 is the Proton donor of the active site. Asp-242, Glu-285, and Asp-312 together coordinate Mg(2+). Residues Lys-337, Arg-366, Ser-367, and Lys-388 each coordinate (2R)-2-phosphoglycerate. Lys-337 acts as the Proton acceptor in catalysis.

The protein belongs to the enolase family. It depends on Mg(2+) as a cofactor.

It is found in the cytoplasm. The protein localises to the secreted. Its subcellular location is the cell surface. It catalyses the reaction (2R)-2-phosphoglycerate = phosphoenolpyruvate + H2O. It participates in carbohydrate degradation; glycolysis; pyruvate from D-glyceraldehyde 3-phosphate: step 4/5. Its function is as follows. Catalyzes the reversible conversion of 2-phosphoglycerate (2-PG) into phosphoenolpyruvate (PEP). It is essential for the degradation of carbohydrates via glycolysis. This Paracoccus denitrificans (strain Pd 1222) protein is Enolase.